We begin with the raw amino-acid sequence, 370 residues long: NADH-quinone oxidoreductase subunit D 2 (370 aa).

It belongs to the complex I 49 kDa subunit family. In terms of assembly, NDH-1 is composed of 14 different subunits. Subunits NuoB, C, D, E, F, and G constitute the peripheral sector of the complex.

The protein localises to the cell membrane. It carries out the reaction a quinone + NADH + 5 H(+)(in) = a quinol + NAD(+) + 4 H(+)(out). Its function is as follows. NDH-1 shuttles electrons from NADH, via FMN and iron-sulfur (Fe-S) centers, to quinones in the respiratory chain. The immediate electron acceptor for the enzyme in this species is believed to be ubiquinone. Couples the redox reaction to proton translocation (for every two electrons transferred, four hydrogen ions are translocated across the cytoplasmic membrane), and thus conserves the redox energy in a proton gradient. The chain is NADH-quinone oxidoreductase subunit D 2 from Herpetosiphon aurantiacus (strain ATCC 23779 / DSM 785 / 114-95).